A 335-amino-acid chain; its full sequence is Legumin type B (335 aa).

Disordered stretches follow at residues 47-87 (PETQ…GNSV) and 102-155 (TEED…GRNG). Residues 105-118 (DTAKRLRSPRDKRN) are compositionally biased toward basic and acidic residues. The span at 135 to 144 (QQEEEEQEEE) shows a compositional bias: acidic residues. Positions 167 to 314 (ENIAQPARAD…AFGLRQRQVT (148 aa)) constitute a Cupin type-1 domain.

The protein belongs to the 11S seed storage protein (globulins) family. Hexamer; each subunit is composed of an acidic and a basic chain derived from a single precursor and linked by a disulfide bond.

Functionally, this protein found in the seeds of many leguminous and non-leguminous plants is the source of sulfur-containing amino acids in seed meals. The chain is Legumin type B (LEB7) from Vicia faba (Broad bean).